The following is a 554-amino-acid chain: Glucose-6-phosphate isomerase (554 aa).

E359 functions as the Proton donor in the catalytic mechanism. Residues H390 and K518 contribute to the active site.

This sequence belongs to the GPI family.

Its subcellular location is the cytoplasm. It carries out the reaction alpha-D-glucose 6-phosphate = beta-D-fructose 6-phosphate. It functions in the pathway carbohydrate biosynthesis; gluconeogenesis. It participates in carbohydrate degradation; glycolysis; D-glyceraldehyde 3-phosphate and glycerone phosphate from D-glucose: step 2/4. In terms of biological role, catalyzes the reversible isomerization of glucose-6-phosphate to fructose-6-phosphate. This Pseudomonas entomophila (strain L48) protein is Glucose-6-phosphate isomerase.